Here is a 506-residue protein sequence, read N- to C-terminus: Voltage-gated potassium channel regulatory subunit KCNG4 (506 aa).

Over 1-216 the chain is Cytoplasmic; the sequence is MPMSSRDRDL…EMVEDPQSGL (216 aa). A helical transmembrane segment spans residues 217 to 238; it reads PGKVFACLSVLFVATTAVSLCV. At 239–259 the chain is on the extracellular side; the sequence is STMPDFRAEEGKGECTRKCYY. A helical transmembrane segment spans residues 260-281; that stretch reads IFVVESICVAWFSLEFCLRFVQ. Over 282–292 the chain is Cytoplasmic; the sequence is APNKCQFFRGP. The helical transmembrane segment at 293–312 threads the bilayer; it reads LNVIDILAISPYYVSLAVSD. Over 313–326 the chain is Extracellular; it reads ESPEAGERPSSSSY. Residues 327 to 351 traverse the membrane as a helical; Voltage-sensor segment; the sequence is LEKVGLVLRVLRALRILYVMRLARH. Topologically, residues 352 to 366 are cytoplasmic; sequence SLGLQTLGLTVRRCA. The chain crosses the membrane as a helical span at residues 367 to 388; it reads REFGLLMLFLAVAVTLFSPLVY. The Extracellular portion of the chain corresponds to 389 to 403; sequence VAENESGRVLEFTSI. Residues 404-415 constitute an intramembrane region (helical); the sequence is PASYWWAIISMT. Residues 416 to 421 carry the Selectivity filter motif; the sequence is TVGYGD. An intramembrane segment occupies 416–423; it reads TVGYGDMV. Residues 424–430 are Extracellular-facing; the sequence is PRSVPGQ. A helical membrane pass occupies residues 431-459; it reads MVALSSILSGILIMAFPATSIFHTFSHSY. At 460-506 the chain is on the cytoplasmic side; the sequence is LELKREQEQVQARLRRLQNTNSASERELLSDVDDLVPEGLTSPGRYM.

This sequence belongs to the potassium channel family. G (TC 1.A.1.2) subfamily. Kv6.4/KCNG4 sub-subfamily. As to quaternary structure, heterotetramer with KCNB1. Does not form homomultimer.

Its subcellular location is the cell membrane. Its function is as follows. Regulatory subunit of the voltage-gated potassium (Kv) channel which, when coassembled with KCNB1, modulates the kinetics parameters of the heterotetrameric channel namely the time course of activation, deactivation and inactivation and on the voltage-dependence of activation. Potassium channel subunit that does not form functional channels by itself. Reduces the deactivation rate. Modulates the threshold for activation by shifting by approximately 20 mV in hyperpolarizing direction. Markedly changes the inactivation by shifting the voltage dependence of inactivation by approximately 40 mV in hyperpolarizing direction. Acceleratee activation and enhances the time course of activation. The sequence is that of Voltage-gated potassium channel regulatory subunit KCNG4 from Mus musculus (Mouse).